Consider the following 565-residue polypeptide: Adenine deaminase 1 (565 aa).

The protein belongs to the metallo-dependent hydrolases superfamily. Adenine deaminase family. Mn(2+) serves as cofactor.

It catalyses the reaction adenine + H2O + H(+) = hypoxanthine + NH4(+). The protein is Adenine deaminase 1 of Rhizobium meliloti (strain 1021) (Ensifer meliloti).